The chain runs to 352 residues: Probable RNA methyltransferase CV_2253 (352 aa).

Catalysis depends on Glu91, which acts as the Proton acceptor. Residues 94 to 320 (LLPRDGLCVS…TKVRDSAGQD (227 aa)) enclose the Radical SAM core domain. Cys101 and Cys325 are disulfide-bonded. The [4Fe-4S] cluster site is built by Cys108, Cys112, and Cys115. S-adenosyl-L-methionine contacts are provided by residues 153 to 154 (GE), Ser183, 206 to 208 (SLH), and Asn282. Residue Cys325 is the S-methylcysteine intermediate of the active site.

Belongs to the radical SAM superfamily. RlmN family. It depends on [4Fe-4S] cluster as a cofactor.

The protein resides in the cytoplasm. This Chromobacterium violaceum (strain ATCC 12472 / DSM 30191 / JCM 1249 / CCUG 213 / NBRC 12614 / NCIMB 9131 / NCTC 9757 / MK) protein is Probable RNA methyltransferase CV_2253.